We begin with the raw amino-acid sequence, 357 residues long: DNA integrity scanning protein DisA (357 aa).

The DAC domain occupies P8–D148. Positions 76, 94, 107, 111, and 128 each coordinate 3',3'-c-di-AMP.

Belongs to the DisA family. Homooctamer. Requires Mg(2+) as cofactor.

The catalysed reaction is 2 ATP = 3',3'-c-di-AMP + 2 diphosphate. With respect to regulation, inhibited by 3'-dATP. Its function is as follows. Participates in a DNA-damage check-point. DisA forms globular foci that rapidly scan along the chromosomes searching for lesions. Functionally, has diadenylate cyclase activity, catalyzing the condensation of 2 ATP molecules into cyclic di-AMP (c-di-AMP). c-di-AMP likely acts as a signaling molecule that may couple DNA integrity with a cellular process. This rate-limiting step is the accessibility of the active site; mutating the possible exit tunnel (residues 128-130) increases product 2-fold despite Arg-130 being important for ATP-binding. Does not convert GTP to c-di-GMP. In Thermotoga maritima (strain ATCC 43589 / DSM 3109 / JCM 10099 / NBRC 100826 / MSB8), this protein is DNA integrity scanning protein DisA.